The chain runs to 1066 residues: E3 ubiquitin-protein ligase RNF31 (1066 aa).

The polyubiquitin-binding stretch occupies residues 1 to 479 (MPGDEERGFL…PEKQRQDKMR (479 aa)). One can recognise a PUB domain in the interval 70-141 (TLSTALNILE…SFPEGQEEPD (72 aa)). The segment at 251–287 (LRQALPGSHQTASLSSSLPASSQPRPPSSSLALGDSS) is disordered. Residues 262-287 (ASLSSSLPASSQPRPPSSSLALGDSS) show a composition bias toward low complexity. 2 consecutive RanBP2-type zinc fingers follow at residues 293-325 (PANA…PKGC) and 344-373 (ARDQ…PRLA). The residue at position 377 (S377) is a Phosphoserine. A RanBP2-type 3 zinc finger spans residues 403-432 (QPQVWYCDHCTFCNSGPVWVCAMCNRTRDP). The disordered stretch occupies residues 434-478 (PTQPALQSYPSSLEKGRPKPGSSQHLGSSLPASCGDPEKQRQDKM). Residues 454 to 464 (GSSQHLGSSLP) are compositionally biased toward polar residues. The span at 469-478 (DPEKQRQDKM) shows a compositional bias: basic and acidic residues. An interaction with RBCK1 region spans residues 557-610 (GNLDEAVEECVRARRRKVHELQSLGFGPKEGSLQALFQHGGDVARALTELQRQR). Residues 558 to 609 (NLDEAVEECVRARRRKVHELQSLGFGPKEGSLQALFQHGGDVARALTELQRQ) form the UBA domain. The tract at residues 689-923 (LAQECAVCGW…KSLHGHHPRD (235 aa)) is TRIAD supradomain. 18 residues coordinate Zn(2+): C693, C696, C711, C713, C716, C719, C738, C741, C793, C796, C811, C814, C819, C822, H830, C835, C865, and C868. The segment at 693-743 (CAVCGWALPRNRMQALISCECTICPECFRQHFTIALKEKHITDMVCPACGR) adopts an RING-type 1 zinc-finger fold. The segment at 773-835 (ALFHKKLTEA…WEEQHRGRSC (63 aa)) adopts an IBR-type zinc-finger fold. The segment at 865–895 (CPKCKFSYALARGGCMHFHCTQCRHQFCSGC) adopts an RING-type 2; atypical zinc-finger fold. The active site involves C879. Zn(2+) contacts are provided by C884, C887, C892, C895, C910, and H919. The tract at residues 904-1066 (KCPDPNCKVK…LGQSIARRRK (163 aa)) is LDD domain.

This sequence belongs to the RBR family. Component of the LUBAC complex (linear ubiquitin chain assembly complex) which consists of SHARPIN, RBCK1 and RNF31. LUBAC has a MW of approximately 600 kDa suggesting a heteromultimeric assembly of its subunits. Associates with the TNF-R1 signaling complex (TNF-RSC) in a stimulation-dependent manner. Interacts (via the PUB domain) with OTULIN (via the PIM motif); the interaction is direct. Interacts (via the PUB domain) with VCP (via the PIM motif). Interacts (via the PUB domain) with SPATA2 (via the PIM motif); interaction is direct and bridges RNF31 and CYLD. Interacts with CYLD; the interaction is indirect and is mediated via SPATA2. Interacts with MUSK. Interacts with CARD11, promoting linear ubiquitination of BCL10. In terms of processing, autoubiquitinated. Interaction with OTULIN is required to suppress formation of 'Met-1'-linked polyubiquitin chains and prevent subsequent inactivation of the LUBAC complex. Cleaved by caspase during apoptosis. In terms of tissue distribution, widely expressed (at protein level). Not expressed in heart.

It localises to the cytoplasm. The enzyme catalyses [E2 ubiquitin-conjugating enzyme]-S-ubiquitinyl-L-cysteine + [acceptor protein]-L-lysine = [E2 ubiquitin-conjugating enzyme]-L-cysteine + [acceptor protein]-N(6)-ubiquitinyl-L-lysine.. It participates in protein modification; protein ubiquitination. Functionally, E3 ubiquitin-protein ligase component of the LUBAC complex which conjugates linear ('Met-1'-linked) polyubiquitin chains to substrates and plays a key role in NF-kappa-B activation and regulation of inflammation. LUBAC conjugates linear polyubiquitin to IKBKG and RIPK1 and is involved in activation of the canonical NF-kappa-B and the JNK signaling pathways. Linear ubiquitination mediated by the LUBAC complex interferes with TNF-induced cell death and thereby prevents inflammation. LUBAC is recruited to the TNF-R1 signaling complex (TNF-RSC) following polyubiquitination of TNF-RSC components by BIRC2 and/or BIRC3 and to conjugate linear polyubiquitin to IKBKG and possibly other components contributing to the stability of the complex. The LUBAC complex is also involved in innate immunity by conjugating linear polyubiquitin chains at the surface of bacteria invading the cytosol to form the ubiquitin coat surrounding bacteria. LUBAC is not able to initiate formation of the bacterial ubiquitin coat, and can only promote formation of linear polyubiquitins on pre-existing ubiquitin. Recruited to the surface of bacteria by RNF213, which initiates the bacterial ubiquitin coat. The bacterial ubiquitin coat acts as an 'eat-me' signal for xenophagy and promotes NF-kappa-B activation. Together with OTULIN, the LUBAC complex regulates the canonical Wnt signaling during angiogenesis. RNF31 is required for linear ubiquitination of BCL10, thereby promoting TCR-induced NF-kappa-B activation. Binds polyubiquitin of different linkage types. This chain is E3 ubiquitin-protein ligase RNF31, found in Mus musculus (Mouse).